Reading from the N-terminus, the 1865-residue chain is Dedicator of cytokinesis protein 1 (1865 aa).

The SH3 domain occupies 9–70 (REEKYGVAFY…PASYIHLKEA (62 aa)). Residues 425–609 (RNDIYVTLVQ…DSFQISTLVC (185 aa)) form the C2 DOCK-type domain. The 411-residue stretch at 1207 to 1617 (YKEIEREEMY…VEKEYGVRIM (411 aa)) folds into the DOCKER domain. Disordered stretches follow at residues 1619–1716 (SSLD…EFKP) and 1732–1865 (TISP…GIVQ). A compositionally biased stretch (low complexity) spans 1639–1666 (PSSSRPLSVASVSSLSSDSTPSRPGSDG). Residues 1680–1694 (RSQDKLDKDDLEKEK) are compositionally biased toward basic and acidic residues. S1681 is modified (phosphoserine). The tract at residues 1687-1695 (KDDLEKEKK) is phosphoinositide-binding. Over residues 1695 to 1704 (KDKKKEKRNS) the composition is skewed to basic residues. Residues 1705 to 1716 (KHQEIFEKEFKP) show a composition bias toward basic and acidic residues. Residues S1743, S1751, S1756, S1761, and S1764 each carry the phosphoserine modification. The span at 1756 to 1766 (SVSPSSPSSQQ) shows a compositional bias: low complexity. T1767 and T1772 each carry phosphothreonine. Residues 1793-1819 (ADVADVPPPLPLKGSVADYGNLMENQD) form an interaction with NCK2 second and third SH3 domain (minor) region. The SH3-binding; interaction with CRK motif lies at 1799-1805 (PPPLPLK). An interaction with NCK2 third SH3 domain (major) region spans residues 1820–1836 (LLGSPTPPPPPPHQRHL). Residues 1824-1851 (PTPPPPPPHQRHLPPPLPSKTPPPPPPK) show a composition bias toward pro residues. The segment at 1837–1852 (PPPLPSKTPPPPPPKT) is interaction with NCK2 (minor). The SH3-binding; interaction with CRK motif lies at 1838 to 1843 (PPLPSK). Residues 1855 to 1865 (KQASVDSGIVQ) are compositionally biased toward polar residues. S1858 carries the post-translational modification Phosphoserine.

It belongs to the DOCK family. In terms of assembly, interacts with the SH3 domains of CRK and NCK2 via multiple sites. Interacts with nucleotide-free RAC1 via its DOCKER domain. Interacts with ELMO1, ELMO2 and probably ELMO3 via its SH3 domain. Interacts with ADGRB1. Identified in a complex with AUTS2 and ELMO2. In terms of tissue distribution, highly expressed in placenta, lung, kidney, pancreas and ovary. Expressed at intermediate level in thymus, testes and colon.

It localises to the cytoplasm. It is found in the membrane. Its function is as follows. Involved in cytoskeletal rearrangements required for phagocytosis of apoptotic cells and cell motility. Along with DOCK1, mediates CRK/CRKL regulation of epithelial and endothelial cell spreading and migration on type IV collagen. Functions as a guanine nucleotide exchange factor (GEF), which activates Rac Rho small GTPases by exchanging bound GDP for free GTP. Its GEF activity may be enhanced by ELMO1. This Homo sapiens (Human) protein is Dedicator of cytokinesis protein 1 (DOCK1).